The following is a 505-amino-acid chain: MEEFQGYLELDKSRQHDLLYPLFFREYIYAFAHDHVLNRSSLLENVSYDNKSGFLIVKHLINRMYHQNNLIISANDSNLKNFGEYNKNLYSQIISEGFVVIMEIPFSLRLVSSLKGTEIVKIYKLRSIHSTFPFLEDKFPHLNYVSNVSIPYPIHPEILVQILRYWVKDASSLHLLRLYLHKYFNWNSIITPKNSVFIFSKMNPRFLLFLYNSHVCEYESILLFLRNKPSHLRLTSSGSFFERIFFYAKIKHSVEEVFVNDFSVTPWFFKAPFMHYVRYRGKSILASKDTPLLMNKWKYYLIHLWQSYFYVWSQPARIYINQLSKHSLIFLGYFSSIRLNLSVVRSQMLKNAFLIDNAMKRLDTLVPISPLIGSLAKMNFCNGLGHPVSKSIWADSSDLDIIDRFAHICRNLSHYYSGSSKKKSLYRIKYILRLSCVKTLSRKHKSTVRAFLKRLGLGLLEEFFTEEEEILSLIFPKTYSTFRKLYRGRIWYLDLFCINDLINHE.

This sequence belongs to the intron maturase 2 family. MatK subfamily.

The protein resides in the plastid. It is found in the chloroplast. Functionally, usually encoded in the trnK tRNA gene intron. Probably assists in splicing its own and other chloroplast group II introns. The polypeptide is Maturase K (Elaeagnus umbellata (Autumn olive)).